We begin with the raw amino-acid sequence, 160 residues long: Transcription elongation factor GreA (160 aa).

The protein belongs to the GreA/GreB family.

Necessary for efficient RNA polymerase transcription elongation past template-encoded arresting sites. The arresting sites in DNA have the property of trapping a certain fraction of elongating RNA polymerases that pass through, resulting in locked ternary complexes. Cleavage of the nascent transcript by cleavage factors such as GreA or GreB allows the resumption of elongation from the new 3'terminus. GreA releases sequences of 2 to 3 nucleotides. The protein is Transcription elongation factor GreA of Leuconostoc citreum (strain KM20).